Reading from the N-terminus, the 133-residue chain is uncharacterized protein (133 aa).

The N-terminal stretch at methionine 1–glycine 22 is a signal peptide. Asparagine 111 carries an N-linked (GlcNAc...) asparagine glycan.

The protein resides in the secreted. This is an uncharacterized protein from Saccharomyces cerevisiae (strain ATCC 204508 / S288c) (Baker's yeast).